Here is a 145-residue protein sequence, read N- to C-terminus: Superoxide dismutase [Mn/Fe] (145 aa).

Fe(3+)-binding residues include His10 and His64. Residues His10 and His64 each coordinate Mn(2+).

This sequence belongs to the iron/manganese superoxide dismutase family. Mn(2+) is required as a cofactor. It depends on Fe(3+) as a cofactor.

The catalysed reaction is 2 superoxide + 2 H(+) = H2O2 + O2. Its function is as follows. Destroys superoxide anion radicals which are normally produced within the cells and which are toxic to biological systems. Catalyzes the dismutation of superoxide anion radicals into O2 and H2O2 by successive reduction and oxidation of the transition metal ion at the active site. This is Superoxide dismutase [Mn/Fe] (sodA) from Streptococcus acidominimus.